A 246-amino-acid chain; its full sequence is tRNA pseudouridine synthase A (246 aa).

The active-site Nucleophile is the Asp52. A substrate-binding site is contributed by Tyr112.

The protein belongs to the tRNA pseudouridine synthase TruA family. In terms of assembly, homodimer.

The catalysed reaction is uridine(38/39/40) in tRNA = pseudouridine(38/39/40) in tRNA. In terms of biological role, formation of pseudouridine at positions 38, 39 and 40 in the anticodon stem and loop of transfer RNAs. This Pelagibacter ubique (strain HTCC1062) protein is tRNA pseudouridine synthase A.